The chain runs to 289 residues: Oxaloacetate decarboxylase (289 aa).

S47 is a substrate binding site. Position 85 (D85) interacts with Mg(2+). Substrate is bound by residues R156 and H232.

It belongs to the isocitrate lyase/PEP mutase superfamily. Oxaloacetate decarboxylase family. As to quaternary structure, homotetramer; dimer of dimers. It depends on Mg(2+) as a cofactor.

The enzyme catalyses oxaloacetate + H(+) = pyruvate + CO2. Its function is as follows. Catalyzes the decarboxylation of oxaloacetate into pyruvate. Seems to play a role in maintaining cellular concentrations of bicarbonate and pyruvate. This is Oxaloacetate decarboxylase from Rhodopseudomonas palustris (strain HaA2).